The primary structure comprises 377 residues: Chaperone protein DnaJ (377 aa).

The J domain occupies 5–70 (DYYEILGVSR…QKRAAYDQYG (66 aa)). The CR-type zinc-finger motif lies at 132–210 (GVTKEIRIPT…CHGHGRIEKS (79 aa)). Zn(2+) contacts are provided by Cys145, Cys148, Cys162, Cys165, Cys184, Cys187, Cys198, and Cys201. CXXCXGXG motif repeat units lie at residues 145-152 (CDVCHGSG), 162-169 (CPTCHGAG), 184-191 (CPHCHGRG), and 198-205 (CNKCHGHG).

It belongs to the DnaJ family. As to quaternary structure, homodimer. The cofactor is Zn(2+).

It localises to the cytoplasm. Its function is as follows. Participates actively in the response to hyperosmotic and heat shock by preventing the aggregation of stress-denatured proteins and by disaggregating proteins, also in an autonomous, DnaK-independent fashion. Unfolded proteins bind initially to DnaJ; upon interaction with the DnaJ-bound protein, DnaK hydrolyzes its bound ATP, resulting in the formation of a stable complex. GrpE releases ADP from DnaK; ATP binding to DnaK triggers the release of the substrate protein, thus completing the reaction cycle. Several rounds of ATP-dependent interactions between DnaJ, DnaK and GrpE are required for fully efficient folding. Also involved, together with DnaK and GrpE, in the DNA replication of plasmids through activation of initiation proteins. The protein is Chaperone protein DnaJ of Edwardsiella ictaluri (strain 93-146).